A 303-amino-acid chain; its full sequence is Lipoyl synthase (303 aa).

Positions 35, 40, 46, 61, 65, 68, and 273 each coordinate [4Fe-4S] cluster. The 216-residue stretch at 47–262 (FRERQATFLI…KELAEKMGFR (216 aa)) folds into the Radical SAM core domain.

Belongs to the radical SAM superfamily. Lipoyl synthase family. Requires [4Fe-4S] cluster as cofactor.

Its subcellular location is the cytoplasm. It catalyses the reaction [[Fe-S] cluster scaffold protein carrying a second [4Fe-4S](2+) cluster] + N(6)-octanoyl-L-lysyl-[protein] + 2 oxidized [2Fe-2S]-[ferredoxin] + 2 S-adenosyl-L-methionine + 4 H(+) = [[Fe-S] cluster scaffold protein] + N(6)-[(R)-dihydrolipoyl]-L-lysyl-[protein] + 4 Fe(3+) + 2 hydrogen sulfide + 2 5'-deoxyadenosine + 2 L-methionine + 2 reduced [2Fe-2S]-[ferredoxin]. It functions in the pathway protein modification; protein lipoylation via endogenous pathway; protein N(6)-(lipoyl)lysine from octanoyl-[acyl-carrier-protein]: step 2/2. Catalyzes the radical-mediated insertion of two sulfur atoms into the C-6 and C-8 positions of the octanoyl moiety bound to the lipoyl domains of lipoate-dependent enzymes, thereby converting the octanoylated domains into lipoylated derivatives. In Geobacter sulfurreducens (strain ATCC 51573 / DSM 12127 / PCA), this protein is Lipoyl synthase.